Consider the following 432-residue polypeptide: Anaerobic glycerol-3-phosphate dehydrogenase subunit B (432 aa).

It belongs to the anaerobic G-3-P dehydrogenase subunit B family. In terms of assembly, composed of a catalytic GlpA/B dimer and of membrane bound GlpC. FMN serves as cofactor.

It carries out the reaction a quinone + sn-glycerol 3-phosphate = dihydroxyacetone phosphate + a quinol. It participates in polyol metabolism; glycerol degradation via glycerol kinase pathway; glycerone phosphate from sn-glycerol 3-phosphate (anaerobic route): step 1/1. Functionally, conversion of glycerol 3-phosphate to dihydroxyacetone. Uses fumarate or nitrate as electron acceptor. The protein is Anaerobic glycerol-3-phosphate dehydrogenase subunit B of Haemophilus influenzae (strain PittEE).